The chain runs to 146 residues: Large ribosomal subunit protein uL11 (146 aa).

The protein belongs to the universal ribosomal protein uL11 family. In terms of assembly, part of the ribosomal stalk of the 50S ribosomal subunit. Interacts with L10 and the large rRNA to form the base of the stalk. L10 forms an elongated spine to which L12 dimers bind in a sequential fashion forming a multimeric L10(L12)X complex. One or more lysine residues are methylated.

Its function is as follows. Forms part of the ribosomal stalk which helps the ribosome interact with GTP-bound translation factors. The sequence is that of Large ribosomal subunit protein uL11 from Buchnera aphidicola subsp. Baizongia pistaciae (strain Bp).